A 49-amino-acid chain; its full sequence is Large ribosomal subunit protein bL33B (49 aa).

This sequence belongs to the bacterial ribosomal protein bL33 family.

In Lacticaseibacillus paracasei (strain ATCC 334 / BCRC 17002 / CCUG 31169 / CIP 107868 / KCTC 3260 / NRRL B-441) (Lactobacillus paracasei), this protein is Large ribosomal subunit protein bL33B.